The following is a 159-amino-acid chain: uncharacterized protein (159 aa).

2 disordered regions span residues 1 to 29 (MHQT…TSES) and 114 to 159 (TRGG…NENT). Positions 15–29 (SFSNESPTSRETSES) are enriched in polar residues.

This is an uncharacterized protein from Homo sapiens (Human).